The following is a 247-amino-acid chain: Orotidine 5'-phosphate decarboxylase (247 aa).

Residues aspartate 22, lysine 44, 71–80 (DLKFHDIPNT), threonine 131, arginine 192, glutamine 201, glycine 221, and arginine 222 contribute to the substrate site. The active-site Proton donor is the lysine 73.

It belongs to the OMP decarboxylase family. Type 1 subfamily. In terms of assembly, homodimer.

It carries out the reaction orotidine 5'-phosphate + H(+) = UMP + CO2. It participates in pyrimidine metabolism; UMP biosynthesis via de novo pathway; UMP from orotate: step 2/2. Its function is as follows. Catalyzes the decarboxylation of orotidine 5'-monophosphate (OMP) to uridine 5'-monophosphate (UMP). The protein is Orotidine 5'-phosphate decarboxylase of Pectobacterium atrosepticum (strain SCRI 1043 / ATCC BAA-672) (Erwinia carotovora subsp. atroseptica).